A 116-amino-acid chain; its full sequence is uncharacterized protein (116 aa).

3 helical membrane passes run 8–28 (FMIY…VSFA), 39–59 (GLLL…NPPF), and 75–95 (FLLI…YLMV).

To M.jannaschii MJ1580.

It localises to the cell membrane. This is an uncharacterized protein from Methanothermobacter thermautotrophicus (strain ATCC 29096 / DSM 1053 / JCM 10044 / NBRC 100330 / Delta H) (Methanobacterium thermoautotrophicum).